The chain runs to 143 residues: Hemoglobin subunit alpha (143 aa).

Position 2 is an N-acetylserine (Ser2). A Globin domain is found at 2 to 143; sequence SLSDKDKAAV…LALALSEKYR (142 aa). Residue His60 coordinates O2. His89 contacts heme b.

Belongs to the globin family. As to quaternary structure, heterotetramer of two alpha chains and two beta chains. Red blood cells.

Functionally, involved in oxygen transport from gills to the various peripheral tissues. This is Hemoglobin subunit alpha (hba) from Cyprinus carpio (Common carp).